A 173-amino-acid polypeptide reads, in one-letter code: MIEFLRRIAAHRLAWGLLAASALFLELSALFFQYVLGLHPCVMCVYERLAILGVLSAGLLGMVAPEKWYLRWSALLLWGYSAFRGLQLALKHVDYQMNPSPFNVCSPFADFPSWAPLDQWLPWLFFPDGDCSEISWQFLSFSMPQWLVAIFAAYLLVFVVVTIGNLVKGRCCS.

Topologically, residues 1–14 (MIEFLRRIAAHRLA) are cytoplasmic. The chain crosses the membrane as a helical span at residues 15–31 (WGLLAASALFLELSALF). Residues 32–49 (FQYVLGLHPCVMCVYERL) lie on the Periplasmic side of the membrane. A disulfide bond links Cys-41 and Cys-44. The chain crosses the membrane as a helical span at residues 50–65 (AILGVLSAGLLGMVAP). Over 66–72 (EKWYLRW) the chain is Cytoplasmic. The helical transmembrane segment at 73–90 (SALLLWGYSAFRGLQLAL) threads the bilayer. Topologically, residues 91–145 (KHVDYQMNPSPFNVCSPFADFPSWAPLDQWLPWLFFPDGDCSEISWQFLSFSMPQ) are periplasmic. Cys-105 and Cys-131 form a disulfide bridge. The chain crosses the membrane as a helical span at residues 146-164 (WLVAIFAAYLLVFVVVTIG). At 165–173 (NLVKGRCCS) the chain is on the cytoplasmic side.

Belongs to the DsbB family.

The protein resides in the cell inner membrane. Required for disulfide bond formation in some periplasmic proteins. Acts by oxidizing the DsbA protein. The polypeptide is Disulfide bond formation protein B (Aeromonas salmonicida (strain A449)).